Reading from the N-terminus, the 151-residue chain is Small ribosomal subunit protein uS11 (151 aa).

Residues 130–151 are disordered; sequence EDVTPIPSDSTRRKGGRRGRRL. A compositionally biased stretch (basic residues) spans 142 to 151; it reads RKGGRRGRRL.

The protein belongs to the universal ribosomal protein uS11 family.

This Aedes aegypti (Yellowfever mosquito) protein is Small ribosomal subunit protein uS11.